We begin with the raw amino-acid sequence, 112 residues long: uncharacterized protein (112 aa).

To Buchnera BU585.

This is an uncharacterized protein from Buchnera aphidicola subsp. Schizaphis graminum (strain Sg).